The chain runs to 163 residues: Extracellular giant hemoglobin major globin subunit B2 (163 aa).

An N-terminal signal peptide occupies residues 1-16 (MIALFVLMGLMAAASA). In terms of domain architecture, Globin spans 19–163 (CCSSEDRANV…RIANGISAGL (145 aa)). Cysteine 20 and cysteine 151 form a disulfide bridge. Cysteine 83 is a binding site for hydrogen sulfide. Histidine 114 is a heme b binding site.

This sequence belongs to the globin family. As to quaternary structure, the 400 kDa hemoglobin consists of a spherical 24-mer arranged as a double layer of dome-shaped dodecamers. Each dodecamer is composed of the 3-fold trimer of the tetramer A1-A2-B1-B2 having one intra-tetramer (A1-B2) disulfide bond and one inter-tetramer (B1-B2) disulfide bond per tetramer.

It is found in the secreted. In terms of biological role, the extracellular giant hemoglobin is able to bind and transport oxygen and hydrosulfide simultaneously and reversibly at two different sites. The sequence is that of Extracellular giant hemoglobin major globin subunit B2 (ghbB2) from Oligobrachia mashikoi (Beard worm).